Reading from the N-terminus, the 61-residue chain is Metallothionein-2 (61 aa).

Residue Met-1 is modified to N-acetylmethionine. The beta stretch occupies residues 1 to 29; it reads MDPNCSCASDGSCSCAGACKCKQCKCTSC. Residues Cys-5, Cys-7, Cys-13, Cys-15, Cys-19, Cys-21, Cys-24, Cys-26, Cys-29, Cys-33, Cys-34, Cys-36, Cys-37, Cys-41, Cys-44, Cys-48, Cys-50, and Cys-57 each coordinate a divalent metal cation. Positions 30–61 are alpha; it reads KKSCCSCCPVGCAKCSQGCICKEASDKCSCCA. Ser-58 is subject to Phosphoserine. Residues Cys-59 and Cys-60 each coordinate a divalent metal cation.

Belongs to the metallothionein superfamily. Type 1 family.

Metallothioneins have a high content of cysteine residues that bind various heavy metals; these proteins are transcriptionally regulated by both heavy metals and glucocorticoids. The chain is Metallothionein-2 (Mt2) from Mus musculus (Mouse).